A 159-amino-acid chain; its full sequence is Phosphopantetheine adenylyltransferase (159 aa).

Serine 9 provides a ligand contact to substrate. ATP contacts are provided by residues 9–10 and histidine 17; that span reads SF. 3 residues coordinate substrate: lysine 41, isoleucine 75, and lysine 89. ATP is bound by residues 90–92, glutamate 100, and 124–130; these read GLR and LEHISSS.

It belongs to the bacterial CoaD family. As to quaternary structure, homohexamer. It depends on Mg(2+) as a cofactor.

It is found in the cytoplasm. The catalysed reaction is (R)-4'-phosphopantetheine + ATP + H(+) = 3'-dephospho-CoA + diphosphate. It participates in cofactor biosynthesis; coenzyme A biosynthesis; CoA from (R)-pantothenate: step 4/5. Reversibly transfers an adenylyl group from ATP to 4'-phosphopantetheine, yielding dephospho-CoA (dPCoA) and pyrophosphate. The sequence is that of Phosphopantetheine adenylyltransferase from Bifidobacterium animalis subsp. lactis (strain AD011).